Consider the following 450-residue polypeptide: MTHIKFDYSKALRFFEERELDYLEPAVKAAHDSLHNGTGAGNDALGWINLPTDYDKEEFARIKKATEKIHSDSDVLIVIGIGGSYLGARAAIETLNHSFYNVLEKGARKTPQVFFAGNSISSSYLHDLIEVVGDRDFSVNVISKSGTTTEPAIAFRVFKELLIKKYGEEGAKKRIYATTDKAKGALKTLADNEGYETFVVPDDVGGRFSVLTAVGLLPIAVSGVDIDALMNGAAAASKDFDKPELKNNIAYQYAAARNVLYRKGKVTELLISYEPGLQYFNEWWKQLFGESEGKDKKGIYPSSANFSTDLHSIGQYIQDGRRNLFETVIKVDKPRHNLTINKEEVDLDGLNYLAGETVDFVNTKAFEGTLLAHTDGEVPNFVVEVPELDAYTFGYLVYFFEKAVAISGYLNGVNPFDQPGVEAYKANMFALLGKPGFEDKKAELEKRLND.

The Proton donor role is filled by Glu-290. Active-site residues include His-311 and Lys-425.

It belongs to the GPI family.

It is found in the cytoplasm. It catalyses the reaction alpha-D-glucose 6-phosphate = beta-D-fructose 6-phosphate. Its pathway is carbohydrate biosynthesis; gluconeogenesis. It participates in carbohydrate degradation; glycolysis; D-glyceraldehyde 3-phosphate and glycerone phosphate from D-glucose: step 2/4. Its function is as follows. Catalyzes the reversible isomerization of glucose-6-phosphate to fructose-6-phosphate. The polypeptide is Glucose-6-phosphate isomerase (Listeria innocua serovar 6a (strain ATCC BAA-680 / CLIP 11262)).